A 122-amino-acid polypeptide reads, in one-letter code: Seminal vesicle secretory protein 5 (122 aa).

A signal peptide spans 1-21 (MSPTSFFLLTLLLVLVTEARG). The interval 23–122 (RERFSQSAED…KTRVKSRILK (100 aa)) is disordered. Positions 27–37 (SQSAEDPSSSH) are enriched in polar residues.

The protein belongs to the SVP2/SVP5/SVP6 family. Testis.

It localises to the secreted. It is found in the extracellular space. The polypeptide is Seminal vesicle secretory protein 5 (Svs5) (Mus musculus (Mouse)).